The sequence spans 135 residues: Large ribosomal subunit protein bL19 (135 aa).

The protein belongs to the bacterial ribosomal protein bL19 family.

Functionally, this protein is located at the 30S-50S ribosomal subunit interface and may play a role in the structure and function of the aminoacyl-tRNA binding site. This chain is Large ribosomal subunit protein bL19, found in Protochlamydia amoebophila (strain UWE25).